The sequence spans 1391 residues: DNA-directed RNA polymerase subunit beta'' (1391 aa).

Zn(2+) contacts are provided by Cys-224, Cys-295, Cys-302, and Cys-305.

The protein belongs to the RNA polymerase beta' chain family. RpoC2 subfamily. In plastids the minimal PEP RNA polymerase catalytic core is composed of four subunits: alpha, beta, beta', and beta''. When a (nuclear-encoded) sigma factor is associated with the core the holoenzyme is formed, which can initiate transcription. Zn(2+) serves as cofactor.

The protein resides in the plastid. The protein localises to the chloroplast. It carries out the reaction RNA(n) + a ribonucleoside 5'-triphosphate = RNA(n+1) + diphosphate. In terms of biological role, DNA-dependent RNA polymerase catalyzes the transcription of DNA into RNA using the four ribonucleoside triphosphates as substrates. This chain is DNA-directed RNA polymerase subunit beta'', found in Buxus microphylla (Littleleaf boxwood).